The following is an 82-amino-acid chain: Cortexin-1 (82 aa).

Residues 1–20 (MSAPWTLSPEPLPPSTGPPV) form a disordered region. Residues 30–50 (TVFAFVLCLLVVLVLLMVRCV) form a helical membrane-spanning segment.

Belongs to the cortexin family. As to expression, neuron specific.

The protein resides in the membrane. In terms of biological role, may mediate extracellular or intracellular signaling of cortical neurons during forebrain development. This Rattus norvegicus (Rat) protein is Cortexin-1 (Ctxn1).